The primary structure comprises 128 residues: Ribonuclease pancreatic (128 aa).

Residues 1–20 are disordered; the sequence is KETAAMKFQRQHMDSGSSLS. Residues Lys-7 and Arg-10 each coordinate substrate. The active-site Proton acceptor is His-12. Intrachain disulfides connect Cys-26-Cys-84, Cys-40-Cys-95, Cys-58-Cys-110, and Cys-65-Cys-72. Asn-34 carries an N-linked (GlcNAc...) asparagine glycan. Substrate is bound by residues 41–45, Lys-66, and Arg-85; that span reads KPVNT. His-119 (proton donor) is an active-site residue.

The protein belongs to the pancreatic ribonuclease family. In terms of assembly, monomer. Interacts with and forms tight 1:1 complexes with RNH1. Dimerization of two such complexes may occur. Interaction with RNH1 inhibits this protein. As to expression, pancreas.

It is found in the secreted. The enzyme catalyses an [RNA] containing cytidine + H2O = an [RNA]-3'-cytidine-3'-phosphate + a 5'-hydroxy-ribonucleotide-3'-[RNA].. It catalyses the reaction an [RNA] containing uridine + H2O = an [RNA]-3'-uridine-3'-phosphate + a 5'-hydroxy-ribonucleotide-3'-[RNA].. In terms of biological role, endonuclease that catalyzes the cleavage of RNA on the 3' side of pyrimidine nucleotides. Acts on single-stranded and double-stranded RNA. This chain is Ribonuclease pancreatic (RNASE1), found in Choloepus hoffmanni (Hoffmann's two-fingered sloth).